The chain runs to 1339 residues: Astrotactin-2 (1339 aa).

Residues 1-49 (MAAAGARLSPGPGSGLRGRPRLCFHPGPPPLLPLLLLFLLLLPPPPLLA) form the signal peptide. Over 50 to 206 (GATAAASREP…IVEEQMHILH (157 aa)) the chain is Lumenal. N-linked (GlcNAc...) asparagine glycosylation occurs at N168. The chain crosses the membrane as a helical span at residues 207–227 (ISVMGGLIALLLLLLVFTVAL). The Cytoplasmic segment spans residues 228-434 (YAQRRWQKRR…KGLLKSPVNK (207 aa)). 2 disordered regions span residues 296 to 316 (EEDEEPPRRANHVSREDEFGS) and 363 to 408 (TPIE…ADDE). Residues 435-455 (TALTLIAVSSCILAMVCGSQM) form a helical membrane-spanning segment. Residues 456-1339 (SCPLTVKVTL…RNTYGESKGR (884 aa)) are Lumenal-facing. 3 consecutive EGF-like domains span residues 510 to 550 (VRDL…HLCV), 651 to 695 (PVRD…SGCY), and 699 to 751 (KGID…KSCL). 9 disulfides stabilise this stretch: C514/C526, C522/C533, C535/C549, C655/C668, C662/C679, C681/C694, C703/C715, C711/C735, and C737/C750. 2 N-linked (GlcNAc...) asparagine glycosylation sites follow: N770 and N783. Intrachain disulfides connect C825-C987, C916-C977, and C983-C990. An N-linked (GlcNAc...) asparagine glycan is attached at N1020. Cystine bridges form between C1036/C1047, C1049/C1062, C1136/C1158, C1190/C1277, and C1298/C1321. The Fibronectin type-III domain occupies 1065–1188 (LLQPVLRLSP…SELSTVTLRT (124 aa)).

This sequence belongs to the astrotactin family. Interacts with ASTN1; the interaction is not calcium-dependent.

Its subcellular location is the membrane. It is found in the perikaryon. The protein localises to the cytoplasm. The protein resides in the cell cortex. It localises to the early endosome. Its subcellular location is the late endosome. It is found in the cytoplasmic vesicle. The protein localises to the clathrin-coated vesicle. Functionally, mediates recycling of the neuronal cell adhesion molecule ASTN1 to the anterior pole of the cell membrane in migrating neurons. Promotes ASTN1 internalization and intracellular transport of endocytosed ASTN1. Selectively binds inositol-4,5-bisphosphate, inositol-3,4,5-trisphosphate and inositol-1,3,4,5-tetrakisphosphate, suggesting it is recruited to membranes that contain lipids with a phosphoinositide headgroup. This is Astrotactin-2 (ASTN2) from Homo sapiens (Human).